We begin with the raw amino-acid sequence, 73 residues long: Small ribosomal subunit protein bS18B (73 aa).

The protein belongs to the bacterial ribosomal protein bS18 family. Part of the 30S ribosomal subunit. Forms a tight heterodimer with protein bS6.

Functionally, binds as a heterodimer with protein bS6 to the central domain of the 16S rRNA, where it helps stabilize the platform of the 30S subunit. The polypeptide is Small ribosomal subunit protein bS18B (Frankia alni (strain DSM 45986 / CECT 9034 / ACN14a)).